Consider the following 89-residue polypeptide: ATP synthase subunit c, sodium ion specific (89 aa).

2 consecutive transmembrane segments (helical) span residues 9-29 (VVLA…IGPG) and 68-88 (GIYS…VGLL).

The protein belongs to the ATPase C chain family. As to quaternary structure, F-type ATPases have 2 components, F(1) - the catalytic core - and F(0) - the membrane sodium channel. F(1) has five subunits: alpha(3), beta(3), gamma(1), delta(1), epsilon(1). F(0) has three main subunits: a(1), b(2) and c(10-14). The alpha and beta chains form an alternating ring which encloses part of the gamma chain. F(1) is attached to F(0) by a central stalk formed by the gamma and epsilon chains, while a peripheral stalk is formed by the delta and b chains.

The protein localises to the cell membrane. F(1)F(0) ATP synthase produces ATP from ADP in the presence of a proton or sodium gradient. F-type ATPases consist of two structural domains, F(1) containing the extramembraneous catalytic core and F(0) containing the membrane sodium channel, linked together by a central stalk and a peripheral stalk. During catalysis, ATP synthesis in the catalytic domain of F(1) is coupled via a rotary mechanism of the central stalk subunits to sodium translocation. In terms of biological role, key component of the F(0) channel; it plays a direct role in translocation across the membrane. A homomeric c-ring of between 10-14 subunits forms the central stalk rotor element with the F(1) delta and epsilon subunits. The chain is ATP synthase subunit c, sodium ion specific (atpE) from Propionigenium modestum.